A 679-amino-acid polypeptide reads, in one-letter code: F-box/LRR-repeat protein 5 (679 aa).

A hemerythrin-like region spans residues 1-159 (MAPFPDEVDV…IKQQVMLQHC (159 aa)). Residues His15, His57, Glu58, Glu61, His80, His126, and Glu130 each coordinate Fe(3+). An F-box domain is found at 205-251 (RVSVSSLPQELLLRIFRFLGPQDLCRCAQVCSVWTQVTRTGSLWRHL). LRR repeat units lie at residues 316 to 342 (EKLL…SLAY), 343 to 367 (SSTL…LDLT), 368 to 395 (QTDV…DLSG), 396 to 426 (CDKI…LLQA), 565 to 595 (CWFE…SLSG), 596 to 623 (CHQI…NLSG), and 624 to 649 (CPLI…HFYY). 4 residues coordinate [2Fe-2S] cluster: Cys650, Cys664, Cys674, and Cys675.

In terms of assembly, part of a SCF (SKP1-cullin-F-box) protein ligase complex. Requires [2Fe-2S] cluster as cofactor. In terms of processing, ubiquitinated upon iron and oxygen depletion, leading to its degradation by the proteasome. Ubiquitination is regulated by the hemerythrin-like region that acts as an oxygen and iron sensor.

Its subcellular location is the cytoplasm. The protein resides in the perinuclear region. It localises to the nucleus. Its pathway is protein modification; protein ubiquitination. Component of some SCF (SKP1-cullin-F-box) protein ligase complex that plays a central role in iron homeostasis by promoting the ubiquitination and subsequent degradation of ireb2/irp2. Upon high iron and oxygen level, it specifically recognizes and binds ireb2/irp2, promoting its ubiquitination and degradation by the proteasome. The sequence is that of F-box/LRR-repeat protein 5 (fbxl5) from Danio rerio (Zebrafish).